A 162-amino-acid chain; its full sequence is General odorant-binding protein 2 (162 aa).

The signal sequence occupies residues 1–18 (MTSKSCLLLVAMVTLTTS). Disulfide bonds link Cys-40–Cys-75, Cys-71–Cys-129, and Cys-118–Cys-138.

This sequence belongs to the PBP/GOBP family. As to expression, antenna.

In terms of biological role, present in the aqueous fluid surrounding olfactory sensory dendrites and are thought to aid in the capture and transport of hydrophobic odorants into and through this fluid. This is General odorant-binding protein 2 from Heliothis virescens (Tobacco budworm moth).